The chain runs to 3526 residues: WD repeat and FYVE domain-containing protein 3 (3526 aa).

Phosphoserine is present on residues Ser-1942 and Ser-2278. Residues 2285 to 2981 (LTGSRRNRKE…PHPPKRVRSR (697 aa)) form a sufficient for localization to p62 bodies/ALIS region. Disordered stretches follow at residues 2403-2429 (ETNV…PARY) and 2459-2522 (SSEG…EKTD). A compositionally biased stretch (basic and acidic residues) spans 2468 to 2477 (EPEHGEDTIA). Residue Ser-2492 is modified to Phosphoserine. The BEACH-type PH domain maps to 2531 to 2656 (EEGEKIQHMY…IRNKVYQRFL (126 aa)). An interaction with SQSTM1 region spans residues 2586 to 3526 (MHEPIIPRGA…RGSEDGPRNC (941 aa)). The region spanning 2683–2976 (GLLSTLVGEK…QLFKKPHPPK (294 aa)) is the BEACH domain. The tract at residues 2981 to 3526 (RLNGDNAGIS…RGSEDGPRNC (546 aa)) is interaction with ATG5. 4 WD repeats span residues 3077-3115 (SEWG…EKAK), 3125-3164 (GHTD…FLTQ), 3167-3206 (GHRA…VSVN), and 3210-3254 (GRSQ…VPET). A disordered region spans residues 3272 to 3335 (AQIGQEAQDE…SGSDDSRRWS (64 aa)). Residues 3278 to 3290 (AQDEDSSDSEADE) are compositionally biased toward acidic residues. The interval 3313-3363 (AASCRATAAWCTDSGSDDSRRWSDQLSLDEKDGFIFVNYSEGQTRAHLQGP) is interaction with GABARAP. Residues Ser-3335 and Ser-3339 each carry the phosphoserine modification. The LC3-interacting region (LIR) signature appears at 3346–3349 (FIFV). One copy of the WD 5 repeat lies at 3408 to 3447 (AHPAEVTALGISKDHSRILVGDSRGRVFSWSVSDQPGRSA). An FYVE-type zinc finger spans residues 3454–3514 (DEGGDSCSGC…VCQNCYYNLQ (61 aa)). Positions 3460, 3463, 3476, 3479, 3484, 3487, 3506, and 3509 each coordinate Zn(2+).

In terms of assembly, directly interacts with ATG5 and associates with the ATG12-ATG5-ATG16L complex. Interacts with p62/SQSTM1; this interaction is required to recruit WDFY3 to cytoplasmic bodies and to PML bodies. Directly interacts with GABARAP, GABARAPL1 and GABARAPL2; the interaction with GABARAP is required for WDFY3 recruitment to MAP1LC3B-positive p62/SQSTM1 bodies. Weakly interacts with MAP1LC3C; this interaction is direct. Does not interact with MAP1LC3A, nor MAP1LC3B. Interacts with TRAF6. As to expression, expressed in osteoclast and their mononuclear precursors (at protein level).

It is found in the nucleus membrane. The protein resides in the cytoplasm. It localises to the cytosol. Its subcellular location is the nucleus. The protein localises to the PML body. It is found in the membrane. The protein resides in the perikaryon. It localises to the cell projection. Its subcellular location is the axon. Its function is as follows. Required for selective macroautophagy (aggrephagy). Acts as an adapter protein by linking specific proteins destined for degradation to the core autophagic machinery members, such as the ATG5-ATG12-ATG16L E3-like ligase, SQSTM1 and LC3. Along with p62/SQSTM1, involved in the formation and autophagic degradation of cytoplasmic ubiquitin-containing inclusions (p62 bodies, ALIS/aggresome-like induced structures). Along with SQSTM1, required to recruit ubiquitinated proteins to PML bodies in the nucleus. Important for normal brain development. Essential for the formation of axonal tracts throughout the brain and spinal cord, including the formation of the major forebrain commissures. Involved in the ability of neural cells to respond to guidance cues. Required for cortical neurons to respond to the trophic effects of netrin-1/NTN1. Regulates Wnt signaling through the removal of DVL3 aggregates, likely in an autophagy-dependent manner. This process may be important for the determination of brain size during embryonic development. May regulate osteoclastogenesis by acting on the TNFSF11/RANKL - TRAF6 pathway. After cytokinetic abscission, involved in midbody remnant degradation. In vitro strongly binds to phosphatidylinositol 3-phosphate (PtdIns3P). This is WD repeat and FYVE domain-containing protein 3 (WDFY3) from Homo sapiens (Human).